Here is a 307-residue protein sequence, read N- to C-terminus: Aspartate carbamoyltransferase catalytic subunit (307 aa).

Carbamoyl phosphate-binding residues include R59 and T60. Residue K87 participates in L-aspartate binding. Carbamoyl phosphate contacts are provided by R109, H137, and Q140. Residues R173 and R223 each coordinate L-aspartate. G266 and P267 together coordinate carbamoyl phosphate.

It belongs to the aspartate/ornithine carbamoyltransferase superfamily. ATCase family. Heterododecamer (2C3:3R2) of six catalytic PyrB chains organized as two trimers (C3), and six regulatory PyrI chains organized as three dimers (R2).

The enzyme catalyses carbamoyl phosphate + L-aspartate = N-carbamoyl-L-aspartate + phosphate + H(+). It functions in the pathway pyrimidine metabolism; UMP biosynthesis via de novo pathway; (S)-dihydroorotate from bicarbonate: step 2/3. Functionally, catalyzes the condensation of carbamoyl phosphate and aspartate to form carbamoyl aspartate and inorganic phosphate, the committed step in the de novo pyrimidine nucleotide biosynthesis pathway. The polypeptide is Aspartate carbamoyltransferase catalytic subunit (Helicobacter pylori (strain Shi470)).